The following is a 367-amino-acid chain: Porin Omp2a (367 aa).

The first 22 residues, 1–22 (MNIKSLLLGSAAALVAASGAQA), serve as a signal peptide directing secretion.

This sequence belongs to the alphaproteobacteria porin family. In terms of assembly, monomer.

It is found in the cell outer membrane. Its function is as follows. Forms passive diffusion pores that allow small molecular weight hydrophilic materials across the outer membrane. In Brucella canis (strain ATCC 23365 / NCTC 10854 / RM-666), this protein is Porin Omp2a (omp2a).